The chain runs to 231 residues: ATP-dependent dethiobiotin synthetase BioD 2 (231 aa).

Position 13 to 18 (13 to 18 (SVGKTV)) interacts with ATP. Residue T17 participates in Mg(2+) binding. Residue K38 is part of the active site. ATP is bound by residues D55, 112–115 (EGTG), 172–173 (NR), 201–203 (PYL), and Q208. Residues D55 and E112 each contribute to the Mg(2+) site.

This sequence belongs to the dethiobiotin synthetase family. In terms of assembly, homodimer. It depends on Mg(2+) as a cofactor.

The protein localises to the cytoplasm. It catalyses the reaction (7R,8S)-7,8-diammoniononanoate + CO2 + ATP = (4R,5S)-dethiobiotin + ADP + phosphate + 3 H(+). The protein operates within cofactor biosynthesis; biotin biosynthesis; biotin from 7,8-diaminononanoate: step 1/2. Functionally, catalyzes a mechanistically unusual reaction, the ATP-dependent insertion of CO2 between the N7 and N8 nitrogen atoms of 7,8-diaminopelargonic acid (DAPA, also called 7,8-diammoniononanoate) to form a ureido ring. The protein is ATP-dependent dethiobiotin synthetase BioD 2 of Escherichia coli O157:H7.